The chain runs to 1281 residues: Dynactin subunit 1 (1281 aa).

The tract at residues 1-25 (MAQSKRHVYSRTPSGSRMSAEASAR) is disordered. The CAP-Gly domain maps to 48–90 (GATLFATGKWVGVILDEAKGKNDGTVQGRKYFTCDEGHGIFVR). A disordered region spans residues 99 to 225 (DGADTTSPET…EEEGLRAQVR (127 aa)). Residues 102 to 114 (DTTSPETPDSSAS) show a composition bias toward polar residues. Residues Thr108, Thr145, Thr146, and Thr147 each carry the phosphothreonine modification. Positions 129 to 152 (SKLRGPKPKKAPTARKTTTRRPKP) are enriched in basic residues. Residues 161–205 (AGASSSLGPSGSASAGELSSSEPSTPAQTPLAAPIIPTPALTSPG) show a composition bias toward low complexity. 2 positions are modified to phosphoserine: Ser179 and Ser212. Positions 214–225 (SKEEEGLRAQVR) are enriched in basic and acidic residues. 2 coiled-coil regions span residues 217-540 (EEGL…QQEA) and 952-1043 (IKEL…QSKR). The interval 911-1281 (EYDAERPPSK…LHQLHDRLIS (371 aa)) is interaction with HPS6. Residues 1065-1084 (GEEQQRGGAPGQAPGIVPGP) form a disordered region.

The protein belongs to the dynactin 150 kDa subunit family. Monomer and homodimer. Subunit of dynactin, a multiprotein complex part of a tripartite complex with dynein and a adapter, such as BICDL1, BICD2 or HOOK3. The dynactin complex is built around ACTR1A/ACTB filament and consists of an actin-related filament composed of a shoulder domain, a pointed end and a barbed end. Its length is defined by its flexible shoulder domain. The soulder is composed of 2 DCTN1 subunits, 4 DCTN2 and 2 DCTN3. DCTN1/p150(glued) binds directly to microtubules and to cytoplasmic dynein. The 4 DCNT2 (via N-terminus) bind the ACTR1A filament and act as molecular rulers to determine the length. The pointed end is important for binding dynein-dynactin cargo adapters. Consists of 4 subunits: ACTR10, DCNT4, DCTN5 and DCTN6. The barbed end is composed of a CAPZA1:CAPZB heterodimers, which binds ACTR1A/ACTB filament and dynactin and stabilizes dynactin. Interacts with the C-terminus of MAPRE1, MAPRE2 and MAPRE3. Interacts (via C-terminus) with SNX6. Interacts with CLN3, DYNAP, ECPAS and FBXL5. Interacts with MISP; this interaction regulates its distribution at the cell cortex. Interacts with CEP131. Interacts with CEP126. Interacts with CLIP1. Interacts with dynein intermediate chain and dynein heavy chain. Interacts with PLK1 (via POLO-box domain). Interacts with TBCB. Binds preferentially to tyrosinated microtubules than to detyrosinated microtubules. Interacts with PARD6A. Interacts with HPS6. Interacts with KIF3A. Interacts with BICD2. Interacts with DST (isoform 9). Interacts with DST (isoform 1). Identified in a complex with MREG and RILP. Interacts with BCCIP (isoform 2/alpha). Interacts with DCDC1. Interacts with AKNA. Interacts with DYNC1I2. Interacts with RUFY3 and RUFY4. Ubiquitinated by a SCF complex containing FBXL5, leading to its degradation by the proteasome. In terms of processing, phosphorylation by SLK at Thr-145, Thr-146 and Thr-147 targets DCTN1 to the centrosome. It is uncertain if SLK phosphorylates all three threonines or one or two of them. PLK1-mediated phosphorylation at Ser-179 is essential for its localization in the nuclear envelope, promotes its dissociation from microtubules during early mitosis and positively regulates nuclear envelope breakdown during prophase.

The protein localises to the cytoplasm. It localises to the cytoskeleton. The protein resides in the microtubule organizing center. It is found in the centrosome. Its subcellular location is the centriole. The protein localises to the spindle. It localises to the nucleus envelope. The protein resides in the cell cortex. Functionally, part of the dynactin complex that activates the molecular motor dynein for ultra-processive transport along microtubules. Plays a key role in dynein-mediated retrograde transport of vesicles and organelles along microtubules by recruiting and tethering dynein to microtubules. Binds to both dynein and microtubules providing a link between specific cargos, microtubules and dynein. Essential for targeting dynein to microtubule plus ends, recruiting dynein to membranous cargos and enhancing dynein processivity (the ability to move along a microtubule for a long distance without falling off the track). Can also act as a brake to slow the dynein motor during motility along the microtubule. Can regulate microtubule stability by promoting microtubule formation, nucleation and polymerization and by inhibiting microtubule catastrophe in neurons. Inhibits microtubule catastrophe by binding both to microtubules and to tubulin, leading to enhanced microtubule stability along the axon. Plays a role in metaphase spindle orientation. Plays a role in centriole cohesion and subdistal appendage organization and function. Its recruitment to the centriole in a KIF3A-dependent manner is essential for the maintenance of centriole cohesion and the formation of subdistal appendage. Also required for microtubule anchoring at the mother centriole. Plays a role in primary cilia formation. The protein is Dynactin subunit 1 (DCTN1) of Sus scrofa (Pig).